The sequence spans 176 residues: Myelin basic protein (176 aa).

Basic residues predominate over residues 1-11 (MASQKHSRGHG). A disordered region spans residues 1–176 (MASQKHSRGH…SRSSSPMARR (176 aa)). A2 carries the post-translational modification N-acetylalanine. A Phosphoserine modification is found at S7. A citrulline mark is found at R25 and R33. The residue at position 58 (S58) is a Phosphoserine. At N97 the chain carries Deamidated asparagine. T103 carries the phosphothreonine modification. Residue Q108 is modified to Deamidated glutamine. R111 is modified (symmetric dimethylarginine). Position 117 is a phosphoserine (S117). The span at 134–153 (SLEHHKSSYKGYKDPHREGH) shows a compositional bias: basic and acidic residues. The segment covering 166 to 176 (RSRSSSPMARR) has biased composition (polar residues). S167 and S171 each carry phosphoserine. A Citrulline modification is found at R176.

This sequence belongs to the myelin basic protein family. Homodimer. Post-translationally, as in other animals, several charge isomers may be produced as a result of optional post-translational modifications, such as phosphorylation of serine or threonine residues, deamidation of glutamine or asparagine residues, citrullination and methylation of arginine residues.

It is found in the myelin membrane. Its function is as follows. Is, with PLP, the most abundant protein component of the myelin membrane in the CNS. Plays a role in both the formation and stabilization of this compact multilayer arrangement of bilayers. Each splice variant and charge isomer may have a specialized function in the assembly of an optimized, biochemically functional myelin membrane. In Xenopus laevis (African clawed frog), this protein is Myelin basic protein (mbp).